The chain runs to 531 residues: Peroxinectin A (531 aa).

Positions 1–21 (MRLNLISFFIIFTILVSISNS) are cleaved as a signal peptide. N62 carries N-linked (GlcNAc...) asparagine glycosylation. Residue H101 is the Proton acceptor of the active site. N-linked (GlcNAc...) asparagine glycans are attached at residues N131 and N338.

The protein belongs to the peroxidase family.

Its subcellular location is the secreted. It catalyses the reaction 2 a phenolic donor + H2O2 = 2 a phenolic radical donor + 2 H2O. The polypeptide is Peroxinectin A (poxA) (Dictyostelium discoideum (Social amoeba)).